The chain runs to 266 residues: Shikimate dehydrogenase (NADP(+)) (266 aa).

Shikimate is bound by residues 14-16 and T61; that span reads SLS. Catalysis depends on K65, which acts as the Proton acceptor. Shikimate contacts are provided by N85 and D100. Residues 124–128 and A210 each bind NADP(+); that span reads GAGGA. Y212 contributes to the shikimate binding site. G233 contributes to the NADP(+) binding site.

It belongs to the shikimate dehydrogenase family. As to quaternary structure, homodimer.

The enzyme catalyses shikimate + NADP(+) = 3-dehydroshikimate + NADPH + H(+). It participates in metabolic intermediate biosynthesis; chorismate biosynthesis; chorismate from D-erythrose 4-phosphate and phosphoenolpyruvate: step 4/7. Involved in the biosynthesis of the chorismate, which leads to the biosynthesis of aromatic amino acids. Catalyzes the reversible NADPH linked reduction of 3-dehydroshikimate (DHSA) to yield shikimate (SA). In Halobacterium salinarum (strain ATCC 29341 / DSM 671 / R1), this protein is Shikimate dehydrogenase (NADP(+)).